The chain runs to 226 residues: PKHD-type hydroxylase mma_3618 (226 aa).

A Fe2OG dioxygenase domain is found at 78-178 (RYMPPLFNRY…RISSFFWVQS (101 aa)). Fe cation contacts are provided by His96, Asp98, and His159. A 2-oxoglutarate-binding site is contributed by Arg169.

Fe(2+) serves as cofactor. L-ascorbate is required as a cofactor.

The polypeptide is PKHD-type hydroxylase mma_3618 (Janthinobacterium sp. (strain Marseille) (Minibacterium massiliensis)).